Reading from the N-terminus, the 123-residue chain is Large ribosomal subunit protein uL14 (123 aa).

The protein belongs to the universal ribosomal protein uL14 family. Part of the 50S ribosomal subunit. Forms a cluster with proteins L3 and L19. In the 70S ribosome, L14 and L19 interact and together make contacts with the 16S rRNA in bridges B5 and B8.

In terms of biological role, binds to 23S rRNA. Forms part of two intersubunit bridges in the 70S ribosome. This Tropheryma whipplei (strain TW08/27) (Whipple's bacillus) protein is Large ribosomal subunit protein uL14.